The primary structure comprises 171 residues: Putative RING finger protein 027R (171 aa).

An RING-type zinc finger spans residues 121–163 (CAVCMTNPVWVDFVWSCKHISTCIKCLKMLSRGSNGFKCPICR).

This sequence belongs to the IIV-6 157L family.

This is Putative RING finger protein 027R from Aedes vexans (Inland floodwater mosquito).